A 374-amino-acid polypeptide reads, in one-letter code: DNA replication and repair protein RecF (374 aa).

30 to 37 is a binding site for ATP; that stretch reads GENAQGKT.

The protein belongs to the RecF family.

It localises to the cytoplasm. In terms of biological role, the RecF protein is involved in DNA metabolism; it is required for DNA replication and normal SOS inducibility. RecF binds preferentially to single-stranded, linear DNA. It also seems to bind ATP. The polypeptide is DNA replication and repair protein RecF (Lactiplantibacillus plantarum (strain ATCC BAA-793 / NCIMB 8826 / WCFS1) (Lactobacillus plantarum)).